Consider the following 219-residue polypeptide: Poxin (219 aa).

His17 serves as the catalytic Proton donor. Tyr138 (shared with catalytic histidine of dimeric partner) is an active-site residue. The active-site Proton acceptor; shared with catalytic histidine of dimeric partner is the Lys142.

This sequence belongs to the poxin family. In terms of assembly, homodimer.

The catalysed reaction is 2',3'-cGAMP + H2O = Gp(2'-5')Ap(3') + H(+). Nuclease that is responsible for viral evasion of host cGAS-STING innate immunity. Cleaves 2',3'-cGAMP which is produced by host cGAS following recognition of cytosolic DNA and blocks the subsequent 2',3'-cGAMP-mediated activation of TMEM173/STING, which normally spreads to adjacent cells and activates the interferon and NF-kappa-B immune responses. The polypeptide is Poxin (OPG188) (Bos taurus (Bovine)).